The sequence spans 254 residues: Phosphoribosylaminoimidazole-succinocarboxamide synthase (254 aa).

The protein belongs to the SAICAR synthetase family.

The enzyme catalyses 5-amino-1-(5-phospho-D-ribosyl)imidazole-4-carboxylate + L-aspartate + ATP = (2S)-2-[5-amino-1-(5-phospho-beta-D-ribosyl)imidazole-4-carboxamido]succinate + ADP + phosphate + 2 H(+). Its pathway is purine metabolism; IMP biosynthesis via de novo pathway; 5-amino-1-(5-phospho-D-ribosyl)imidazole-4-carboxamide from 5-amino-1-(5-phospho-D-ribosyl)imidazole-4-carboxylate: step 1/2. In Bartonella henselae (strain ATCC 49882 / DSM 28221 / CCUG 30454 / Houston 1) (Rochalimaea henselae), this protein is Phosphoribosylaminoimidazole-succinocarboxamide synthase.